A 99-amino-acid chain; its full sequence is uncharacterized protein (99 aa).

Transmembrane regions (helical) follow at residues 7-29, 39-61, and 68-90; these read FFIS…YTLY, FISS…ARYN, and FCNL…LWLL.

Its subcellular location is the cell membrane. This is an uncharacterized protein from Archaeoglobus fulgidus (strain ATCC 49558 / DSM 4304 / JCM 9628 / NBRC 100126 / VC-16).